The sequence spans 311 residues: Transcriptional regulatory protein MoaR1 (311 aa).

The ompR/PhoB-type DNA-binding region spans 15 to 117 (LNATTAGAVQ…SEPPGYRLLI (103 aa)).

Belongs to the AfsR/DnrI/RedD regulatory family.

Acts as a positive transcriptional regulator of the molybdopterin biosynthesis moa1 locus, promoting the expression of the moaA1B1C1D1 genes. This is Transcriptional regulatory protein MoaR1 (moaR1) from Mycobacterium bovis (strain BCG / Pasteur 1173P2).